The following is an 84-amino-acid chain: Small ribosomal subunit protein bS16 (84 aa).

Belongs to the bacterial ribosomal protein bS16 family.

The chain is Small ribosomal subunit protein bS16 from Paraburkholderia phytofirmans (strain DSM 17436 / LMG 22146 / PsJN) (Burkholderia phytofirmans).